We begin with the raw amino-acid sequence, 314 residues long: uncharacterized protein (314 aa).

Positions 1–70 are disordered; sequence MAGNSQRRGA…QGRHKKTDDT (70 aa). Positions 44 to 65 are enriched in basic residues; the sequence is RPHHPAGKRAAKAARQAQGRHK. Residues G265, I285, and L294 each contribute to the S-adenosyl-L-methionine site.

The protein belongs to the class IV-like SAM-binding methyltransferase superfamily. RNA methyltransferase TrmH family.

This is an uncharacterized protein from Mycolicibacterium gilvum (strain PYR-GCK) (Mycobacterium gilvum (strain PYR-GCK)).